A 480-amino-acid chain; its full sequence is Adenosylhomocysteinase (480 aa).

Substrate-binding residues include T63, D142, and E203. 204–206 (TTT) is an NAD(+) binding site. Substrate-binding residues include K233 and D237. NAD(+)-binding positions include N238, 267–272 (GYGDVG), E290, N325, 346–348 (IGH), and N394.

This sequence belongs to the adenosylhomocysteinase family. NAD(+) serves as cofactor.

Its subcellular location is the cytoplasm. It carries out the reaction S-adenosyl-L-homocysteine + H2O = L-homocysteine + adenosine. The protein operates within amino-acid biosynthesis; L-homocysteine biosynthesis; L-homocysteine from S-adenosyl-L-homocysteine: step 1/1. In terms of biological role, may play a key role in the regulation of the intracellular concentration of adenosylhomocysteine. This Xanthomonas campestris pv. campestris (strain 8004) protein is Adenosylhomocysteinase.